The primary structure comprises 650 residues: Rab proteins geranylgeranyltransferase component A 1 (650 aa).

Disordered regions lie at residues 156-208 (IPAE…ETPK) and 603-650 (PAPP…EPSE). The segment covering 177-190 (ATGKKENSDAKSST) has biased composition (basic and acidic residues). Residues 616–634 (DSSQQEVPESSVTPETNSE) show a composition bias toward polar residues.

The protein belongs to the Rab GDI family. In terms of assembly, monomer. Heterotrimer composed of RABGGTA, RABGGTB and CHM; within this trimer, RABGGTA and RABGGTB form the catalytic component B, while CHM (component A) mediates Rab protein binding. Can associate with the Rab GGTase dimer (RGGT or component B) prior to Rab protein binding; the association is stabilized by geranylgeranyl pyrophosphate (GGpp). The CHM:RGGT:Rab complex is destabilized by GGpp. Interacts with RAB1A, RAB1B, RAB7A and RAB27A and mediates their prenylation. Interacts with RAB5A. Interacts with the non-phosphorylated forms of RAB3A, RAB3B, RAB3C, RAB3D, RAB5B, RAB5C RAB8A, RAB8B, RAB10, RAB12, RAB35, and RAB43. Most abundant in the heart, brain, and spleen. Lower levels seen in the lung, liver, muscle and kidney. Extremely low levels seen in the testis.

The protein localises to the cytoplasm. The protein resides in the cytosol. In terms of biological role, substrate-binding subunit of the Rab geranylgeranyltransferase (GGTase) complex. Binds unprenylated Rab proteins and presents the substrate peptide to the catalytic component B composed of RABGGTA and RABGGTB, and remains bound to it after the geranylgeranyl transfer reaction. The component A is thought to be regenerated by transferring its prenylated Rab back to the donor membrane. Besides, a pre-formed complex consisting of CHM and the Rab GGTase dimer (RGGT or component B) can bind to and prenylate Rab proteins; this alternative pathway is proposed to be the predominant pathway for Rab protein geranylgeranylation. The chain is Rab proteins geranylgeranyltransferase component A 1 (Chm) from Rattus norvegicus (Rat).